The following is a 590-amino-acid chain: L-asparaginase (590 aa).

Residues 6–357 (AHVLVLYTGG…VEKKAMMVKN (352 aa)) form the Asparaginase/glutaminase domain. Thr16 serves as the catalytic O-isoaspartyl threonine intermediate. The segment at 44-351 (NDDDYVSTYY…KDCWELVEKK (308 aa)) is asparaginase. Substrate is bound by residues 85–87 (DSS) and 117–118 (TD). ANK repeat units lie at residues 398–427 (IFPQ…DLSV), 431–460 (NGRN…SFHL), 497–526 (RLGV…DINQ), and 530–559 (NGET…DPYK).

This sequence in the N-terminal section; belongs to the asparaginase 1 family. As to expression, may be present in the larval cuticle.

The catalysed reaction is L-asparagine + H2O = L-aspartate + NH4(+). The sequence is that of L-asparaginase from Dirofilaria immitis (Canine heartworm).